The primary structure comprises 161 residues: E3 ubiquitin ligase complex SCF subunit sconC (161 aa).

The interaction with the F-box domain of F-box proteins stretch occupies residues 103–161 (ILAANYLDIKGLLDVGCKTVANMIKGKSPEEIRKTFNIQNDFTPEEEDQIRRENEWAEE).

It belongs to the SKP1 family. In terms of assembly, component of the SCF (SKP1-CUL1-F-box protein) E3 ubiquitin ligase complexes.

It participates in protein modification; protein ubiquitination. Essential component of the SCF (SKP1-CUL1-F-box protein) E3 ubiquitin ligase complexes, which mediate the ubiquitination and subsequent proteasomal degradation of target proteins. Controls sulfur metabolite repression, probably by mediating the inactivation or degradation of the metR transcription factor. The chain is E3 ubiquitin ligase complex SCF subunit sconC (sconC) from Aspergillus terreus (strain NIH 2624 / FGSC A1156).